Here is a 375-residue protein sequence, read N- to C-terminus: MSCPVIELTQQLIRRPSLSPDDAGCQALLIERLQAIGFTVERMDFADTQNFWAWRGQGETLAFAGHTDVVPPGDADRWINPPFEPTIRDGMLFGRGAADMKGSLAAMVVAAERFVAQHPNHTGRLAFLITSDEEASAHNGTVKVVEALMARNERLDYCLVGEPSSIEVVGDVVKNGRRGSLTCNLTIHGVQGHVAYPHLADNPVHRAAPFLNELVAIEWDQSNEFFPATSMQIANIQAGTGSNNVTPGELFVQFNFRFSTELTDEMIKAQVLALLEKHQLRYTVDWWLSGQPFLTARGKLVDAVVNAVEHYNEIKPQLLTTGGTSDGRFIARMGAQVVELGPVNATIHKINECVNAADLQLLARMYQRIMEQLVA.

His-66 contacts Zn(2+). Asp-68 is a catalytic residue. Asp-99 lines the Zn(2+) pocket. Glu-133 acts as the Proton acceptor in catalysis. Positions 134, 162, and 348 each coordinate Zn(2+).

This sequence belongs to the peptidase M20A family. DapE subfamily. In terms of assembly, homodimer. Zn(2+) is required as a cofactor. The cofactor is Co(2+).

It catalyses the reaction N-succinyl-(2S,6S)-2,6-diaminopimelate + H2O = (2S,6S)-2,6-diaminopimelate + succinate. The protein operates within amino-acid biosynthesis; L-lysine biosynthesis via DAP pathway; LL-2,6-diaminopimelate from (S)-tetrahydrodipicolinate (succinylase route): step 3/3. Catalyzes the hydrolysis of N-succinyl-L,L-diaminopimelic acid (SDAP), forming succinate and LL-2,6-diaminopimelate (DAP), an intermediate involved in the bacterial biosynthesis of lysine and meso-diaminopimelic acid, an essential component of bacterial cell walls. The sequence is that of Succinyl-diaminopimelate desuccinylase from Shigella dysenteriae serotype 1 (strain Sd197).